Reading from the N-terminus, the 229-residue chain is Non-structural protein P8 (229 aa).

Residues 13–31 (KMKHNQDRVEEPSQVRVDD) are compositionally biased toward basic and acidic residues. The disordered stretch occupies residues 13–46 (KMKHNQDRVEEPSQVRVDDTISQPPRYAPSAPMP). The span at 36–46 (PPRYAPSAPMP) shows a compositional bias: low complexity. 2 consecutive transmembrane segments (helical) span residues 119 to 139 (IIHTTLLVAAVVALLTSVCTL) and 162 to 182 (SLNPMLGVVNLGATFLMMVCA).

It belongs to the orbivirus NS3 family. In terms of assembly, forms homooligomers via coiled-coil motif. Interacts with host OPTN; this interaction inhibits innate immune response.

It localises to the host cell membrane. The protein resides in the host Golgi apparatus. In terms of biological role, plays a role in the inhibition of host innate immune response. Interacts with host OPTN and thus inhibits the recruitment of TBK1 to the host Golgi apparatus. In turn, downstream partner IRF3 cannot be activated and IFN-beta production is impaired. Facilitates viral particle release either by increasing plasma membrane permeability through a viroporin-like activity or by viral budding. This is Non-structural protein P8 (Segment-10) from Antilocapra americana (Pronghorn).